We begin with the raw amino-acid sequence, 274 residues long: 3-methyl-2-oxobutanoate hydroxymethyltransferase (274 aa).

Mg(2+) contacts are provided by Asp44 and Asp83. Residues 44 to 45, Asp83, and Lys113 contribute to the 3-methyl-2-oxobutanoate site; that span reads DS. Residue Glu115 coordinates Mg(2+). The active-site Proton acceptor is the Glu182.

Belongs to the PanB family. In terms of assembly, homodecamer; pentamer of dimers. The cofactor is Mg(2+).

Its subcellular location is the cytoplasm. It catalyses the reaction 3-methyl-2-oxobutanoate + (6R)-5,10-methylene-5,6,7,8-tetrahydrofolate + H2O = 2-dehydropantoate + (6S)-5,6,7,8-tetrahydrofolate. Its pathway is cofactor biosynthesis; (R)-pantothenate biosynthesis; (R)-pantoate from 3-methyl-2-oxobutanoate: step 1/2. Its function is as follows. Catalyzes the reversible reaction in which hydroxymethyl group from 5,10-methylenetetrahydrofolate is transferred onto alpha-ketoisovalerate to form ketopantoate. The sequence is that of 3-methyl-2-oxobutanoate hydroxymethyltransferase from Campylobacter jejuni (strain RM1221).